A 169-amino-acid chain; its full sequence is S-ribosylhomocysteine lyase (169 aa).

Positions 54, 58, and 128 each coordinate Fe cation.

The protein belongs to the LuxS family. Homodimer. Fe cation is required as a cofactor.

The enzyme catalyses S-(5-deoxy-D-ribos-5-yl)-L-homocysteine = (S)-4,5-dihydroxypentane-2,3-dione + L-homocysteine. Functionally, involved in the synthesis of autoinducer 2 (AI-2) which is secreted by bacteria and is used to communicate both the cell density and the metabolic potential of the environment. The regulation of gene expression in response to changes in cell density is called quorum sensing. Catalyzes the transformation of S-ribosylhomocysteine (RHC) to homocysteine (HC) and 4,5-dihydroxy-2,3-pentadione (DPD). This is S-ribosylhomocysteine lyase from Shewanella oneidensis (strain ATCC 700550 / JCM 31522 / CIP 106686 / LMG 19005 / NCIMB 14063 / MR-1).